The chain runs to 236 residues: Phosphoribosylaminoimidazole-succinocarboxamide synthase (236 aa).

Belongs to the SAICAR synthetase family.

The enzyme catalyses 5-amino-1-(5-phospho-D-ribosyl)imidazole-4-carboxylate + L-aspartate + ATP = (2S)-2-[5-amino-1-(5-phospho-beta-D-ribosyl)imidazole-4-carboxamido]succinate + ADP + phosphate + 2 H(+). Its pathway is purine metabolism; IMP biosynthesis via de novo pathway; 5-amino-1-(5-phospho-D-ribosyl)imidazole-4-carboxamide from 5-amino-1-(5-phospho-D-ribosyl)imidazole-4-carboxylate: step 1/2. This Lactococcus lactis subsp. cremoris (Streptococcus cremoris) protein is Phosphoribosylaminoimidazole-succinocarboxamide synthase (purC).